Consider the following 446-residue polypeptide: FAD-dependent monooxygenase eupB (446 aa).

The chain crosses the membrane as a helical span at residues E10–L30. N33 carries N-linked (GlcNAc...) asparagine glycosylation. 3 residues coordinate FAD: E40, A53, and R125. Residues R206 and Y239 contribute to the active site. The N-linked (GlcNAc...) asparagine glycan is linked to N243. Residues D322 and A335 each coordinate FAD. An N-linked (GlcNAc...) asparagine glycan is attached at N395.

The protein belongs to the paxM FAD-dependent monooxygenase family. FAD serves as cofactor.

The protein resides in the membrane. It participates in secondary metabolite biosynthesis; terpenoid biosynthesis. FAD-dependent monooxygenase; part of the gene cluster that mediates the biosynthesis of eupenifeldin, a bistropolone meroterpenoid that acts as an antitumor agent. The first step of eupenifeldin biosynthesis is the biosynthesis of 3-methylorcinaldehyde performed by the non-reducing polyketide synthase eupA. Oxidative dearomatization of 3-methylorcinaldehyde likely catalyzed by the FAD-dependent monooxygenase eupB is followed by oxidative ring expansion by the 2-oxoglutarate-dependent dioxygenase eupC to provide the first tropolone metabolite, tropolone stipitaldehyde. In parallel, generation of sesquiterpene alpha-humulene from farnesylpyrophosphate (FPP) is catalyzed by the terpene cyclase eupE. The cytochrome P450 monooxygenase eupD then hydroxylates humulene to humulenol. The putative Diels-Alderase eupF probably catalyzes the formation of the tropolone-humulene skeleton by linking humulenol and the polyketide moiety. The short-chain dehydrogenase/reductase eupG and the flavin-dependent monooxygenase eupH are also essential for eupenifeldin biosynthesis and are likely the additional decorating enzymes of the tropolone-humulene skeleton to produce final eupenifeldin or derivatives. The chain is FAD-dependent monooxygenase eupB from Phoma sp.